We begin with the raw amino-acid sequence, 191 residues long: UPF0149 protein VS_2635 (191 aa).

It belongs to the UPF0149 family.

The polypeptide is UPF0149 protein VS_2635 (Vibrio atlanticus (strain LGP32) (Vibrio splendidus (strain Mel32))).